Reading from the N-terminus, the 205-residue chain is Cytochrome c biogenesis ATP-binding export protein CcmA (205 aa).

An ABC transporter domain is found at 2–204 (LEVSNLTAIR…SPKLRKIKLG (203 aa)). An ATP-binding site is contributed by 34–41 (GRNGTGKT).

Belongs to the ABC transporter superfamily. CcmA exporter (TC 3.A.1.107) family. In terms of assembly, the complex is composed of two ATP-binding proteins (CcmA) and two transmembrane proteins (CcmB).

It is found in the cell inner membrane. It carries out the reaction heme b(in) + ATP + H2O = heme b(out) + ADP + phosphate + H(+). Part of the ABC transporter complex CcmAB involved in the biogenesis of c-type cytochromes; once thought to export heme, this seems not to be the case, but its exact role is uncertain. Responsible for energy coupling to the transport system. The polypeptide is Cytochrome c biogenesis ATP-binding export protein CcmA (Vibrio parahaemolyticus serotype O3:K6 (strain RIMD 2210633)).